Consider the following 275-residue polypeptide: Large ribosomal subunit protein uL2c (275 aa).

The disordered stretch occupies residues 222–258; sequence GSAMNPVDHPHGGGEGRAPIGRARPVSPWGRPALGAK.

Belongs to the universal ribosomal protein uL2 family. As to quaternary structure, part of the 50S ribosomal subunit.

It localises to the plastid. The protein localises to the chloroplast. The protein is Large ribosomal subunit protein uL2c (rpl2) of Chlorella vulgaris (Green alga).